The following is a 173-amino-acid chain: Transcriptional repressor NrdR (173 aa).

Residues 3-34 fold into a zinc finger; it reads CPYCGSLDTQVKDSRPTEDNTAIRRRRVCPDC. The 91-residue stretch at 49–139 folds into the ATP-cone domain; sequence LMVVKRSGRR…VYRNFREARD (91 aa).

It belongs to the NrdR family. Zn(2+) is required as a cofactor.

Negatively regulates transcription of bacterial ribonucleotide reductase nrd genes and operons by binding to NrdR-boxes. This Azorhizobium caulinodans (strain ATCC 43989 / DSM 5975 / JCM 20966 / LMG 6465 / NBRC 14845 / NCIMB 13405 / ORS 571) protein is Transcriptional repressor NrdR.